The following is a 394-amino-acid chain: 3-dehydroquinate synthase (394 aa).

Residues 112–116 (GVIGD), 136–137 (TT), Lys149, Lys158, and 176–179 (TLAT) contribute to the NAD(+) site. The Zn(2+) site is built by Glu191, His254, and His276. Residues 371–388 (STNQHTTYSPHQHATTKP) are compositionally biased toward polar residues. Residues 371–394 (STNQHTTYSPHQHATTKPPNRRPH) form a disordered region.

The protein belongs to the sugar phosphate cyclases superfamily. Dehydroquinate synthase family. NAD(+) is required as a cofactor. Requires Co(2+) as cofactor. It depends on Zn(2+) as a cofactor.

It is found in the cytoplasm. It catalyses the reaction 7-phospho-2-dehydro-3-deoxy-D-arabino-heptonate = 3-dehydroquinate + phosphate. The protein operates within metabolic intermediate biosynthesis; chorismate biosynthesis; chorismate from D-erythrose 4-phosphate and phosphoenolpyruvate: step 2/7. Functionally, catalyzes the conversion of 3-deoxy-D-arabino-heptulosonate 7-phosphate (DAHP) to dehydroquinate (DHQ). The polypeptide is 3-dehydroquinate synthase (Xylella fastidiosa (strain 9a5c)).